The following is a 1217-amino-acid chain: Splicing factor 3B subunit 3 (1217 aa).

It belongs to the RSE1 family. As to quaternary structure, component of the 17S U2 SnRNP complex, a ribonucleoprotein complex that contains small nuclear RNA (snRNA) U2 and a number of specific proteins. Part of the SF3B subcomplex of the 17S U2 SnRNP complex. SF3B associates with the splicing subcomplex SF3A and a 12S RNA unit to form the U2 small nuclear ribonucleoproteins complex (U2 snRNP). Component of the minor (U12-type spliceosome) spliceosome.

Its subcellular location is the nucleus. Functionally, component of the 17S U2 SnRNP complex of the spliceosome, a large ribonucleoprotein complex that removes introns from transcribed pre-mRNAs. The 17S U2 SnRNP complex (1) directly participates in early spliceosome assembly and (2) mediates recognition of the intron branch site during pre-mRNA splicing by promoting the selection of the pre-mRNA branch-site adenosine, the nucleophile for the first step of splicing. Within the 17S U2 SnRNP complex, SF3B3 is part of the SF3B subcomplex, which is required for 'A' complex assembly formed by the stable binding of U2 snRNP to the branchpoint sequence in pre-mRNA. Also acts as a component of the minor spliceosome, which is involved in the splicing of U12-type introns in pre-mRNAs. In Danio rerio (Zebrafish), this protein is Splicing factor 3B subunit 3 (sf3b3).